The chain runs to 124 residues: Small ribosomal subunit protein uS12 (124 aa).

The interval 1–25 (MATINQLVRKPRQATTYKSASPALD) is disordered. Position 89 is a 3-methylthioaspartic acid (Asp-89).

Belongs to the universal ribosomal protein uS12 family. As to quaternary structure, part of the 30S ribosomal subunit. Contacts proteins S8 and S17. May interact with IF1 in the 30S initiation complex.

With S4 and S5 plays an important role in translational accuracy. Functionally, interacts with and stabilizes bases of the 16S rRNA that are involved in tRNA selection in the A site and with the mRNA backbone. Located at the interface of the 30S and 50S subunits, it traverses the body of the 30S subunit contacting proteins on the other side and probably holding the rRNA structure together. The combined cluster of proteins S8, S12 and S17 appears to hold together the shoulder and platform of the 30S subunit. This chain is Small ribosomal subunit protein uS12, found in Stenotrophomonas maltophilia (strain R551-3).